The primary structure comprises 100 residues: MIPMQHGLILAAILFTLGLTGLLIRRNLIFMLISLEVMINSAALAWVVAGSHWGHPDGQIFYLLAITLAAAEASIGLALLLQLYRRHHTLNIDILSEMRG.

Helical transmembrane passes span 4 to 24 (MQHG…GLLI), 28 to 48 (LIFM…AWVV), and 60 to 80 (IFYL…LALL).

This sequence belongs to the complex I subunit 4L family. NDH-1 is composed of 13 different subunits. Subunits NuoA, H, J, K, L, M, N constitute the membrane sector of the complex.

Its subcellular location is the cell membrane. The enzyme catalyses a quinone + NADH + 5 H(+)(in) = a quinol + NAD(+) + 4 H(+)(out). Its function is as follows. NDH-1 shuttles electrons from NADH, via FMN and iron-sulfur (Fe-S) centers, to quinones in the respiratory chain. The immediate electron acceptor for the enzyme in this species is believed to be ubiquinone. Couples the redox reaction to proton translocation (for every two electrons transferred, four hydrogen ions are translocated across the cytoplasmic membrane), and thus conserves the redox energy in a proton gradient. This Hamiltonella defensa subsp. Acyrthosiphon pisum (strain 5AT) protein is NADH-quinone oxidoreductase subunit K.